The chain runs to 409 residues: Na(+)-translocating NADH-quinone reductase subunit F (409 aa).

Residues 5 to 25 traverse the membrane as a helical segment; that stretch reads FIFGIGAFTAIVLVLAVVILI. The 95-residue stretch at 34 to 128 folds into the 2Fe-2S ferredoxin-type domain; the sequence is GDITISINND…SMDVELPEEV (95 aa). 4 residues coordinate [2Fe-2S] cluster: Cys71, Cys77, Cys80, and Cys112. One can recognise an FAD-binding FR-type domain in the interval 131 to 271; the sequence is VKKWECTVIS…SGPFGEFFAK (141 aa).

Belongs to the NqrF family. Composed of six subunits; NqrA, NqrB, NqrC, NqrD, NqrE and NqrF. The cofactor is [2Fe-2S] cluster. It depends on FAD as a cofactor.

It is found in the cell inner membrane. It carries out the reaction a ubiquinone + n Na(+)(in) + NADH + H(+) = a ubiquinol + n Na(+)(out) + NAD(+). Its function is as follows. NQR complex catalyzes the reduction of ubiquinone-1 to ubiquinol by two successive reactions, coupled with the transport of Na(+) ions from the cytoplasm to the periplasm. The first step is catalyzed by NqrF, which accepts electrons from NADH and reduces ubiquinone-1 to ubisemiquinone by a one-electron transfer pathway. In Mannheimia succiniciproducens (strain KCTC 0769BP / MBEL55E), this protein is Na(+)-translocating NADH-quinone reductase subunit F.